The chain runs to 206 residues: ATP-dependent Clp protease proteolytic subunit 1 (206 aa).

Serine 100 acts as the Nucleophile in catalysis. Residue histidine 125 is part of the active site.

This sequence belongs to the peptidase S14 family. In terms of assembly, fourteen ClpP subunits assemble into 2 heptameric rings which stack back to back to give a disk-like structure with a central cavity, resembling the structure of eukaryotic proteasomes.

Its subcellular location is the cytoplasm. The catalysed reaction is Hydrolysis of proteins to small peptides in the presence of ATP and magnesium. alpha-casein is the usual test substrate. In the absence of ATP, only oligopeptides shorter than five residues are hydrolyzed (such as succinyl-Leu-Tyr-|-NHMec, and Leu-Tyr-Leu-|-Tyr-Trp, in which cleavage of the -Tyr-|-Leu- and -Tyr-|-Trp bonds also occurs).. Its function is as follows. Cleaves peptides in various proteins in a process that requires ATP hydrolysis. Has a chymotrypsin-like activity. Plays a major role in the degradation of misfolded proteins. In Myxococcus xanthus (strain DK1622), this protein is ATP-dependent Clp protease proteolytic subunit 1.